The sequence spans 183 residues: Peptidyl-prolyl cis-trans isomerase H (183 aa).

Positions 19–182 (FFDVALGGEP…QDVVIIQCGE (164 aa)) constitute a PPIase cyclophilin-type domain.

The protein belongs to the cyclophilin-type PPIase family. PPIase H subfamily.

It localises to the nucleus. It carries out the reaction [protein]-peptidylproline (omega=180) = [protein]-peptidylproline (omega=0). PPIases accelerate the folding of proteins. It catalyzes the cis-trans isomerization of proline imidic peptide bonds in oligopeptides. This chain is Peptidyl-prolyl cis-trans isomerase H (cyp3), found in Emericella nidulans (strain FGSC A4 / ATCC 38163 / CBS 112.46 / NRRL 194 / M139) (Aspergillus nidulans).